Here is a 45-residue protein sequence, read N- to C-terminus: Endo-1,4-beta-xylanase Xyn10A (45 aa).

It belongs to the glycosyl hydrolase 10 (cellulase F) family.

The protein localises to the secreted. The protein resides in the extracellular space. It carries out the reaction Endohydrolysis of (1-&gt;4)-beta-D-xylosidic linkages in xylans.. It catalyses the reaction Endohydrolysis of (1-&gt;4)-beta-D-glucosidic linkages in cellulose, lichenin and cereal beta-D-glucans.. It participates in glycan degradation; xylan degradation. Has xylanase, avicelase and cellobiohydrolase activity. The sequence is that of Endo-1,4-beta-xylanase Xyn10A from Gloeophyllum trabeum (Brown rot fungus).